Consider the following 333-residue polypeptide: NADH-quinone oxidoreductase subunit H (333 aa).

8 helical membrane-spanning segments follow: residues 17–37 (VIQA…MSFI), 91–111 (VAMA…TLGV), 116–136 (IGLL…LFGG), 156–176 (ISYE…AGSF), 188–208 (MWFI…GVAV), 244–264 (YVNI…GWLA), 272–292 (FIPP…MFVL), and 310–330 (WKVC…VILM).

It belongs to the complex I subunit 1 family. As to quaternary structure, NDH-1 is composed of 14 different subunits. Subunits NuoA, H, J, K, L, M, N constitute the membrane sector of the complex.

It is found in the cell inner membrane. It catalyses the reaction a quinone + NADH + 5 H(+)(in) = a quinol + NAD(+) + 4 H(+)(out). Its function is as follows. NDH-1 shuttles electrons from NADH, via FMN and iron-sulfur (Fe-S) centers, to quinones in the respiratory chain. The immediate electron acceptor for the enzyme in this species is believed to be ubiquinone. Couples the redox reaction to proton translocation (for every two electrons transferred, four hydrogen ions are translocated across the cytoplasmic membrane), and thus conserves the redox energy in a proton gradient. This subunit may bind ubiquinone. This is NADH-quinone oxidoreductase subunit H from Acinetobacter baylyi (strain ATCC 33305 / BD413 / ADP1).